Consider the following 236-residue polypeptide: F-box and leucine-rich protein 22 (236 aa).

The F-box domain maps to 1-46; the sequence is MHITQLNRECLLCLFSFLDKDSRRSLSRTCSQLRDVFEDPTLWPLL. LRR repeat units follow at residues 15-40, 43-72, 98-123, 124-149, 150-175, and 176-201; these read FSFL…FEDP, WPLL…SICW, HESL…TLSG, CGHV…RLEN, CARV…HVDF, and CRNV…AERS.

In terms of assembly, directly interacts with SKP1 and CUL1. Enriched in cardiac muscle (at protein level).

Its subcellular location is the cytoplasm. It localises to the myofibril. It is found in the sarcomere. The protein localises to the z line. It functions in the pathway protein modification; protein ubiquitination. Its function is as follows. Substrate-recognition component of the SCF (SKP1-CUL1-F-box protein)-type E3 ubiquitin ligase complex. Promotes ubiquitination of sarcomeric proteins alpha-actinin-2 (ACTN2) and filamin-C (FLNC). The polypeptide is F-box and leucine-rich protein 22 (Fbxl22) (Mus musculus (Mouse)).